The following is a 535-amino-acid chain: MGSGGPLLLLRGLLLVGAAYCAAPRPPRHSSRPNVLLVACDSFDGRLTFYPGNQTVDLPFINFMKRHGSVFLNAYTNSPICCPSRAAMWSGLFTHLTESWNNFKGLDPDYVTWMDLMQKHGYYTQKYGKLDYTSGHHSVSNRVEAWTRDVEFLLRQEGRPKVNLTGDRRHVRVMKTDWQVTDKAVTWIKKEAVNLTQPFALYLGLNLPHPYPSPYAGENFGSSTFLTSPYWLEKVKYEAIKIPTWTALSEMHPVDYYSSYTKNCTGEFTKQEVRRIRAFYYAMCAETDAMLGEIISALQDTDLLKKTIIMFTSDHGELAMEHRQFYKMSMYEGSSHVPLLVMGPGIRKQQQVSAVVSLVDIYPTMLDLARIPVLQNLSGYSLLPLLLEKAEDEVPRRGPRPSWVLSEFHGCNVNASTYMLRTDQWKYITYSDGVSVPPQLFDLSADPDELTNVAIKFPETVQSLDKILRSIVNYPKVSSTVQNYNKKQFISWKQSLGQNYSNVIANLRWHQDWLKEPKKYEDAIDRWLSQREQRK.

The signal sequence occupies residues 1–21 (MGSGGPLLLLRGLLLVGAAYC). The Ca(2+) site is built by Asp41 and Cys81. Cys81 functions as the Nucleophile in the catalytic mechanism. Cys81 carries the 3-oxoalanine (Cys) modification. Lys129 serves as a coordination point for substrate. An N-linked (GlcNAc...) asparagine glycan is attached at Asn194. His252 contacts substrate. Asn263 carries N-linked (GlcNAc...) asparagine glycosylation. 2 residues coordinate Ca(2+): Asp314 and His315. N-linked (GlcNAc...) asparagine glycosylation is found at Asn376, Asn414, and Asn499.

This sequence belongs to the sulfatase family. Ca(2+) is required as a cofactor. Post-translationally, the conversion to 3-oxoalanine (also known as C-formylglycine, FGly), of a serine or cysteine residue in prokaryotes and of a cysteine residue in eukaryotes, is critical for catalytic activity.

Its subcellular location is the secreted. It is found in the lysosome. The enzyme catalyses an aryl sulfate + H2O = a phenol + sulfate + H(+). The catalysed reaction is Hydrolysis of the 2-sulfate groups of the 2-O-sulfo-D-glucuronate residues of chondroitin sulfate, heparin and heparitin sulfate.. Catalyzes the hydrolysis of pseudosubstrates such as p-nitrocatechol sulfate and p-nitrophenyl sulfate. Catalyzes the hydrolysis of the 2-sulfate groups of the 2-O-sulfo-D-glucuronate residues of chondroitin sulfate, heparin and heparitin sulfate. Acts selectively on 2-sulfoglucuronate and lacks activity against 2-sulfoiduronate. In Gallus gallus (Chicken), this protein is Arylsulfatase K (ARSK).